Consider the following 268-residue polypeptide: Nitrite transporter NirC (268 aa).

The Cytoplasmic segment spans residues 1–25 (MFTDTINKCAANAARIARLSANNPL). Residues 26 to 46 (GFWVSSAMAGAYVGLGIILIF) traverse the membrane as a helical segment. At 47–59 (TLGNLLDPSVRPL) the chain is on the periplasmic side. A helical membrane pass occupies residues 60-80 (VMGATFGIALTLVIIAGSELF). At 81-112 (TGHTMFLTFGVKAGSISHGQMWAILPQTWLGN) the chain is on the cytoplasmic side. The helical transmembrane segment at 113–133 (LVGSVFVAMLYSWGGGSLLPV) threads the bilayer. The Periplasmic segment spans residues 134-151 (DTSIVHSVALAKTTAPAM). Residues 152–172 (VLFFKGALCNWLVCLAIWMAL) form a helical membrane-spanning segment. Residues 173 to 179 (RTEGAAK) are Cytoplasmic-facing. The chain crosses the membrane as a helical span at residues 180–200 (FIAIWWCLLAFIASGYEHSIA). The Periplasmic portion of the chain corresponds to 201–225 (NMTLFALSWFGNHSEAYTLAGIGHN). A helical membrane pass occupies residues 226–246 (LLWVTLGNTLSGAVFMGLGYW). Over 247–268 (YATPKANRPVADKFNQTETAAG) the chain is Cytoplasmic.

It belongs to the FNT transporter (TC 1.A.16) family.

The protein localises to the cell inner membrane. Functionally, catalyzes nitrite uptake and nitrite export across the cytoplasmic membrane. Is up to 10-fold more active than NarK or NarU in nitrite uptake for subsequent reduction in the cytoplasm by the NirB/NirD nitrite reductase. The polypeptide is Nitrite transporter NirC (nirC) (Escherichia coli (strain K12)).